The following is a 205-amino-acid chain: Small ribosomal subunit protein uS4 (205 aa).

Residues 95–158 (SRLDNIVYRM…TKSPLVKNFI (64 aa)) form the S4 RNA-binding domain.

Belongs to the universal ribosomal protein uS4 family. In terms of assembly, part of the 30S ribosomal subunit. Contacts protein S5. The interaction surface between S4 and S5 is involved in control of translational fidelity.

In terms of biological role, one of the primary rRNA binding proteins, it binds directly to 16S rRNA where it nucleates assembly of the body of the 30S subunit. Functionally, with S5 and S12 plays an important role in translational accuracy. The sequence is that of Small ribosomal subunit protein uS4 from Mycoplasma genitalium (strain ATCC 33530 / DSM 19775 / NCTC 10195 / G37) (Mycoplasmoides genitalium).